A 256-amino-acid polypeptide reads, in one-letter code: Small ribosomal subunit protein bS18m (256 aa).

The segment at 19 to 106 (GQRTAQFSTT…GGQRYGSNSQ (88 aa)) is disordered. Polar residues predominate over residues 21–30 (RTAQFSTTSP). A compositionally biased stretch (low complexity) spans 44-66 (NAPRTNTNTSSPSSNNNNNAGSS).

The protein belongs to the bacterial ribosomal protein bS18 family. Component of the mitochondrial small ribosomal subunit (mt-SSU). Mature N.crassa 74S mitochondrial ribosomes consist of a small (37S) and a large (54S) subunit. The 37S small subunit contains a 16S ribosomal RNA (16S mt-rRNA) and 32 different proteins. The 54S large subunit contains a 23S rRNA (23S mt-rRNA) and 42 different proteins.

Its subcellular location is the mitochondrion. In terms of biological role, component of the mitochondrial ribosome (mitoribosome), a dedicated translation machinery responsible for the synthesis of mitochondrial genome-encoded proteins, including at least some of the essential transmembrane subunits of the mitochondrial respiratory chain. The mitoribosomes are attached to the mitochondrial inner membrane and translation products are cotranslationally integrated into the membrane. In Neurospora crassa (strain ATCC 24698 / 74-OR23-1A / CBS 708.71 / DSM 1257 / FGSC 987), this protein is Small ribosomal subunit protein bS18m (rsm18).